Reading from the N-terminus, the 1087-residue chain is DNA polymerase II large subunit (1087 aa).

It belongs to the archaeal DNA polymerase II family. As to quaternary structure, heterodimer of a large subunit and a small subunit.

The catalysed reaction is DNA(n) + a 2'-deoxyribonucleoside 5'-triphosphate = DNA(n+1) + diphosphate. It catalyses the reaction Exonucleolytic cleavage in the 3'- to 5'-direction to yield nucleoside 5'-phosphates.. Its function is as follows. Possesses two activities: a DNA synthesis (polymerase) and an exonucleolytic activity that degrades single-stranded DNA in the 3'- to 5'-direction. Has a template-primer preference which is characteristic of a replicative DNA polymerase. The protein is DNA polymerase II large subunit (polC) of Thermoplasma acidophilum (strain ATCC 25905 / DSM 1728 / JCM 9062 / NBRC 15155 / AMRC-C165).